Here is a 645-residue protein sequence, read N- to C-terminus: 1,4-alpha-glucan branching enzyme GlgB (645 aa).

Asp309 (nucleophile) is an active-site residue. Glu352 serves as the catalytic Proton donor. A disordered region spans residues 619–645; the sequence is VKTRKGSKKQDGSKTKVRSNVTSRGKR. Positions 636–645 are enriched in polar residues; it reads RSNVTSRGKR.

It belongs to the glycosyl hydrolase 13 family. GlgB subfamily. As to quaternary structure, monomer.

It carries out the reaction Transfers a segment of a (1-&gt;4)-alpha-D-glucan chain to a primary hydroxy group in a similar glucan chain.. It participates in glycan biosynthesis; glycogen biosynthesis. Catalyzes the formation of the alpha-1,6-glucosidic linkages in glycogen by scission of a 1,4-alpha-linked oligosaccharide from growing alpha-1,4-glucan chains and the subsequent attachment of the oligosaccharide to the alpha-1,6 position. This chain is 1,4-alpha-glucan branching enzyme GlgB, found in Bacillus cereus (strain 03BB102).